A 311-amino-acid chain; its full sequence is tRNA-cytidine(32) 2-sulfurtransferase (311 aa).

A PP-loop motif motif is present at residues Ser-47–Ser-52. 3 residues coordinate [4Fe-4S] cluster: Cys-122, Cys-125, and Cys-213.

It belongs to the TtcA family. As to quaternary structure, homodimer. The cofactor is Mg(2+). Requires [4Fe-4S] cluster as cofactor.

It localises to the cytoplasm. The enzyme catalyses cytidine(32) in tRNA + S-sulfanyl-L-cysteinyl-[cysteine desulfurase] + AH2 + ATP = 2-thiocytidine(32) in tRNA + L-cysteinyl-[cysteine desulfurase] + A + AMP + diphosphate + H(+). Its pathway is tRNA modification. Its function is as follows. Catalyzes the ATP-dependent 2-thiolation of cytidine in position 32 of tRNA, to form 2-thiocytidine (s(2)C32). The sulfur atoms are provided by the cysteine/cysteine desulfurase (IscS) system. The protein is tRNA-cytidine(32) 2-sulfurtransferase of Salmonella paratyphi A (strain ATCC 9150 / SARB42).